A 138-amino-acid polypeptide reads, in one-letter code: Small ribosomal subunit protein uS12 (138 aa).

The interval 33-55 (KEHTNVSSPQKRGVCTRVGTMTP) is disordered.

This sequence belongs to the universal ribosomal protein uS12 family. As to quaternary structure, part of the 30S ribosomal subunit. Contacts proteins S8 and S17. May interact with IF1 in the 30S initiation complex. Interacts with BrxC.

In terms of biological role, with S4 and S5 plays an important role in translational accuracy. Interacts with and stabilizes bases of the 16S rRNA that are involved in tRNA selection in the A site and with the mRNA backbone. Located at the interface of the 30S and 50S subunits, it traverses the body of the 30S subunit contacting proteins on the other side and probably holding the rRNA structure together. The combined cluster of proteins S8, S12 and S17 appears to hold together the shoulder and platform of the 30S subunit. This is Small ribosomal subunit protein uS12 (rpsL) from Bacillus subtilis (strain 168).